The following is a 366-amino-acid chain: tRNA/tmRNA (uracil-C(5))-methyltransferase (366 aa).

The S-adenosyl-L-methionine site is built by Gln-189, Tyr-217, Asn-222, Glu-238, and Asp-298. Cys-323 serves as the catalytic Nucleophile. The Proton acceptor role is filled by Glu-357.

It belongs to the class I-like SAM-binding methyltransferase superfamily. RNA M5U methyltransferase family. TrmA subfamily.

The enzyme catalyses uridine(54) in tRNA + S-adenosyl-L-methionine = 5-methyluridine(54) in tRNA + S-adenosyl-L-homocysteine + H(+). The catalysed reaction is uridine(341) in tmRNA + S-adenosyl-L-methionine = 5-methyluridine(341) in tmRNA + S-adenosyl-L-homocysteine + H(+). Dual-specificity methyltransferase that catalyzes the formation of 5-methyluridine at position 54 (m5U54) in all tRNAs, and that of position 341 (m5U341) in tmRNA (transfer-mRNA). The sequence is that of tRNA/tmRNA (uracil-C(5))-methyltransferase from Idiomarina loihiensis (strain ATCC BAA-735 / DSM 15497 / L2-TR).